Reading from the N-terminus, the 152-residue chain is Superoxide dismutase [Cu-Zn] (152 aa).

Cu cation is bound by residues H45, H47, and H62. C56 and C145 are oxidised to a cystine. Zn(2+) is bound by residues H62, H70, H79, and D82. H119 serves as a coordination point for Cu cation.

This sequence belongs to the Cu-Zn superoxide dismutase family. In terms of assembly, homodimer. It depends on Cu cation as a cofactor. Zn(2+) is required as a cofactor.

The protein resides in the cytoplasm. It catalyses the reaction 2 superoxide + 2 H(+) = H2O2 + O2. Destroys radicals which are normally produced within the cells and which are toxic to biological systems. The chain is Superoxide dismutase [Cu-Zn] (SODCC) from Ipomoea batatas (Sweet potato).